We begin with the raw amino-acid sequence, 79 residues long: Dolichyl-diphosphooligosaccharide--protein glycosyltransferase subunit TMEM258 (79 aa).

A run of 2 helical transmembrane segments spans residues 18 to 38 (LPLL…AFTM) and 55 to 75 (FIAA…LLWV).

This sequence belongs to the OST5 family. In terms of assembly, component of the oligosaccharyltransferase (OST) complex.

Its subcellular location is the membrane. The protein operates within protein modification; protein glycosylation. Functionally, subunit of the oligosaccharyl transferase (OST) complex that catalyzes the initial transfer of a defined glycan (Glc(3)Man(9)GlcNAc(2) in eukaryotes) from the lipid carrier dolichol-pyrophosphate to an asparagine residue within an Asn-X-Ser/Thr consensus motif in nascent polypeptide chains, the first step in protein N-glycosylation. N-glycosylation occurs cotranslationally and the complex associates with the Sec61 complex at the channel-forming translocon complex that mediates protein translocation across the endoplasmic reticulum (ER). All subunits are required for a maximal enzyme activity. The protein is Dolichyl-diphosphooligosaccharide--protein glycosyltransferase subunit TMEM258 of Caenorhabditis briggsae.